A 283-amino-acid polypeptide reads, in one-letter code: Fructose-1,6-bisphosphatase class 1 (283 aa).

Mg(2+) contacts are provided by Glu-67, Asp-86, Leu-88, and Asp-89. Substrate is bound by residues 89-92 (DGSS), Tyr-195, and Lys-225. A Mg(2+)-binding site is contributed by Glu-231.

Belongs to the FBPase class 1 family. Homotetramer. It depends on Mg(2+) as a cofactor.

The protein resides in the cytoplasm. The enzyme catalyses beta-D-fructose 1,6-bisphosphate + H2O = beta-D-fructose 6-phosphate + phosphate. Its pathway is carbohydrate biosynthesis; gluconeogenesis. The protein is Fructose-1,6-bisphosphatase class 1 of Natronomonas pharaonis (strain ATCC 35678 / DSM 2160 / CIP 103997 / JCM 8858 / NBRC 14720 / NCIMB 2260 / Gabara) (Halobacterium pharaonis).